A 620-amino-acid polypeptide reads, in one-letter code: Chaperone protein HscA homolog (620 aa).

It belongs to the heat shock protein 70 family.

Functionally, chaperone involved in the maturation of iron-sulfur cluster-containing proteins. Has a low intrinsic ATPase activity which is markedly stimulated by HscB. In Pseudomonas putida (strain ATCC 47054 / DSM 6125 / CFBP 8728 / NCIMB 11950 / KT2440), this protein is Chaperone protein HscA homolog.